Here is a 686-residue protein sequence, read N- to C-terminus: Eukaryotic translation initiation factor 3 subunit B (686 aa).

Residues 1-29 (MAKKHAGADANDSDYNEEPNFEDPPGFVD) are disordered. The span at 11 to 21 (NDSDYNEEPNF) shows a compositional bias: acidic residues. The 85-residue stretch at 53–137 (SVVVVDNIPK…HTFAVNLFTD (85 aa)) folds into the RRM domain. WD repeat units lie at residues 203-242 (TRER…KIQK), 289-327 (DGMS…LLDL), 330-365 (IKIP…TLME), 438-480 (EIRE…KPSL), and 526-571 (PDHF…IKRT). A coiled-coil region spans residues 590–642 (AEEKQKEIKKNLKKYYAVFEQKDRLRLTRASKELLEKRAQLRETFMEYRNKRI).

Belongs to the eIF-3 subunit B family. Component of the eukaryotic translation initiation factor 3 (eIF-3) complex. The eIF-3 complex interacts with pix. Interacts with mxt.

Its subcellular location is the cytoplasm. In terms of biological role, RNA-binding component of the eukaryotic translation initiation factor 3 (eIF-3) complex, which is involved in protein synthesis of a specialized repertoire of mRNAs and, together with other initiation factors, stimulates binding of mRNA and methionyl-tRNAi to the 40S ribosome. The eIF-3 complex specifically targets and initiates translation of a subset of mRNAs involved in cell proliferation. This Drosophila ananassae (Fruit fly) protein is Eukaryotic translation initiation factor 3 subunit B.